The primary structure comprises 78 residues: UPF0291 protein Exig_1097 (78 aa).

Residues 57–78 (EEGTDVTPEKLKQAQEEERNKQ) form a disordered region. Basic and acidic residues predominate over residues 63–78 (TPEKLKQAQEEERNKQ).

This sequence belongs to the UPF0291 family.

It is found in the cytoplasm. This chain is UPF0291 protein Exig_1097, found in Exiguobacterium sibiricum (strain DSM 17290 / CCUG 55495 / CIP 109462 / JCM 13490 / 255-15).